Here is a 156-residue protein sequence, read N- to C-terminus: Ribosomal RNA large subunit methyltransferase H (156 aa).

S-adenosyl-L-methionine is bound by residues Leu-73, Gly-104, and 123-128 (VSSLTL).

The protein belongs to the RNA methyltransferase RlmH family. As to quaternary structure, homodimer.

The protein resides in the cytoplasm. It catalyses the reaction pseudouridine(1915) in 23S rRNA + S-adenosyl-L-methionine = N(3)-methylpseudouridine(1915) in 23S rRNA + S-adenosyl-L-homocysteine + H(+). Functionally, specifically methylates the pseudouridine at position 1915 (m3Psi1915) in 23S rRNA. The sequence is that of Ribosomal RNA large subunit methyltransferase H from Paraburkholderia phymatum (strain DSM 17167 / CIP 108236 / LMG 21445 / STM815) (Burkholderia phymatum).